Consider the following 129-residue polypeptide: MFCNLSPMIDFDALKSEKGLILAVVQDQLSREVLMCAYMNREALEKTVETGITHFWSRSRQQLWKKGETSGHVQKVKEIRVDCDMDSLLLLVEQVGGACHMGYRSCFYRNLEGEVVGEKVFEPDEVYKS.

Asp-82 contacts Mg(2+). Cys-83 is a binding site for Zn(2+). Residues Asp-84 and Asp-86 each coordinate Mg(2+). Residues Cys-99 and Cys-106 each coordinate Zn(2+).

Belongs to the PRA-CH family. Homodimer. The cofactor is Mg(2+). Requires Zn(2+) as cofactor.

It localises to the cytoplasm. It catalyses the reaction 1-(5-phospho-beta-D-ribosyl)-5'-AMP + H2O = 1-(5-phospho-beta-D-ribosyl)-5-[(5-phospho-beta-D-ribosylamino)methylideneamino]imidazole-4-carboxamide. It participates in amino-acid biosynthesis; L-histidine biosynthesis; L-histidine from 5-phospho-alpha-D-ribose 1-diphosphate: step 3/9. In terms of biological role, catalyzes the hydrolysis of the adenine ring of phosphoribosyl-AMP. This is Phosphoribosyl-AMP cyclohydrolase from Methanosarcina barkeri (strain Fusaro / DSM 804).